A 276-amino-acid polypeptide reads, in one-letter code: Diaminopimelate epimerase (276 aa).

Substrate-binding residues include asparagine 13, glutamine 46, and asparagine 66. Cysteine 75 (proton donor) is an active-site residue. Substrate-binding positions include 76 to 77 (GN), asparagine 159, asparagine 192, and 210 to 211 (ER). Cysteine 219 (proton acceptor) is an active-site residue. Residue 220–221 (GT) coordinates substrate.

Belongs to the diaminopimelate epimerase family. Homodimer.

Its subcellular location is the cytoplasm. The enzyme catalyses (2S,6S)-2,6-diaminopimelate = meso-2,6-diaminopimelate. It functions in the pathway amino-acid biosynthesis; L-lysine biosynthesis via DAP pathway; DL-2,6-diaminopimelate from LL-2,6-diaminopimelate: step 1/1. In terms of biological role, catalyzes the stereoinversion of LL-2,6-diaminopimelate (L,L-DAP) to meso-diaminopimelate (meso-DAP), a precursor of L-lysine and an essential component of the bacterial peptidoglycan. This chain is Diaminopimelate epimerase, found in Pseudomonas putida (strain GB-1).